A 582-amino-acid polypeptide reads, in one-letter code: Pineapple eye protein (582 aa).

The C2HC pre-PHD-type zinc finger occupies 6–44 (ELQCLICKYSDTDDLVFGEWMIVRNLQVHYFCLLLSTHL). Residues 6-119 (ELQCLICKYS…QYKSYCYKCR (114 aa)) form an extended PHD domain (ePHD) region. The PHD-type; atypical zinc-finger motif lies at 72 to 119 (RKCWYCNKIGASLQCDRCRSLFHLKCGLENRAVFEFCGQYKSYCYKCR). Disordered regions lie at residues 292–311 (PART…DGSF) and 323–422 (RSLT…ASEI). Residues 340-363 (SSNITVIFSQPKSNATSERLSLSP) show a composition bias toward polar residues. Basic and acidic residues predominate over residues 383–399 (SIDENHSPQPIARRDTS).

Required for survival of imaginal disk cells possibly by regulation of cell apoptosis. Required for germline stem cell self-renewal through mediation of BMP signaling. The sequence is that of Pineapple eye protein from Drosophila melanogaster (Fruit fly).